Reading from the N-terminus, the 180-residue chain is Inorganic pyrophosphatase (180 aa).

The substrate site is built by Lys-30, Arg-44, and Tyr-56. Residues Asp-66, Asp-71, and Asp-103 each contribute to the Mg(2+) site. Tyr-142 is a binding site for substrate.

It belongs to the PPase family. As to quaternary structure, homohexamer. It depends on Mg(2+) as a cofactor.

It is found in the cytoplasm. It carries out the reaction diphosphate + H2O = 2 phosphate + H(+). In terms of biological role, catalyzes the hydrolysis of inorganic pyrophosphate (PPi) forming two phosphate ions. The polypeptide is Inorganic pyrophosphatase (Buchnera aphidicola subsp. Schizaphis graminum (strain Sg)).